The following is a 428-amino-acid chain: Trigger factor (428 aa).

Positions 163 to 248 (GDMVIIDYKG…IHEIKEKEVP (86 aa)) constitute a PPIase FKBP-type domain.

Belongs to the FKBP-type PPIase family. Tig subfamily.

Its subcellular location is the cytoplasm. The catalysed reaction is [protein]-peptidylproline (omega=180) = [protein]-peptidylproline (omega=0). Involved in protein export. Acts as a chaperone by maintaining the newly synthesized protein in an open conformation. Functions as a peptidyl-prolyl cis-trans isomerase. The chain is Trigger factor from Alkaliphilus oremlandii (strain OhILAs) (Clostridium oremlandii (strain OhILAs)).